A 258-amino-acid chain; its full sequence is Trypsin (258 aa).

The first 16 residues, 1-16 (MIRFTLALAVIGVTFA), serve as a signal peptide directing secretion. Positions 17–29 (ASTPQIETNPNLE) are cleaved as a propeptide — activation peptide. Residues 30 to 257 (IIGGHDANII…FRDWINEETE (228 aa)) form the Peptidase S1 domain. A disulfide bridge connects residues Cys55 and Cys71. Residue His70 is the Charge relay system of the active site. An N-linked (GlcNAc...) asparagine glycan is attached at Asn110. Asp117 functions as the Charge relay system in the catalytic mechanism. Asn130 and Asn188 each carry an N-linked (GlcNAc...) asparagine glycan. Cystine bridges form between Cys182/Cys197 and Cys209/Cys233. The Charge relay system role is filled by Ser213.

It belongs to the peptidase S1 family. Expressed in larval carcasses and gut, and adult gut.

Its subcellular location is the secreted. The catalysed reaction is Preferential cleavage: Arg-|-Xaa, Lys-|-Xaa.. This is Trypsin from Phaedon cochleariae (Mustard beetle).